Here is a 524-residue protein sequence, read N- to C-terminus: Cytochrome P450 4F11 (524 aa).

The chain crosses the membrane as a helical span at residues 15 to 37 (AASPWLLLLLVGGSWLLARVLAW). Cysteine 45 and cysteine 260 each carry 4-hydroxynonenal-conjugated cysteine. 4-hydroxynonenal-conjugated histidine is present on histidine 261. Glutamate 328 is a binding site for heme. Histidine 347 is subject to 4-hydroxynonenal-conjugated histidine. Cysteine 354 carries the 4-hydroxynonenal-conjugated cysteine modification. Lysine 451 carries the 4-hydroxynonenal-conjugated lysine modification. Cysteine 468 serves as a coordination point for heme.

It belongs to the cytochrome P450 family. Heme serves as cofactor. 4-hydroxynonenal conjugation impairs substrate binding and the long-chain fatty acid omega-monooxygenase activity. As to expression, expressed mainly in human liver, followed by kidney, heart, and skeletal muscle.

The protein localises to the endoplasmic reticulum membrane. It localises to the microsome membrane. The catalysed reaction is an organic molecule + reduced [NADPH--hemoprotein reductase] + O2 = an alcohol + oxidized [NADPH--hemoprotein reductase] + H2O + H(+). It catalyses the reaction an omega-methyl-long-chain fatty acid + reduced [NADPH--hemoprotein reductase] + O2 = an omega-hydroxy-long-chain fatty acid + oxidized [NADPH--hemoprotein reductase] + H2O + H(+). The enzyme catalyses dodecanoate + reduced [NADPH--hemoprotein reductase] + O2 = 12-hydroxydodecanoate + oxidized [NADPH--hemoprotein reductase] + H2O + H(+). It carries out the reaction hexadecanoate + reduced [NADPH--hemoprotein reductase] + O2 = 16-hydroxyhexadecanoate + oxidized [NADPH--hemoprotein reductase] + H2O + H(+). The catalysed reaction is (9Z)-octadecenoate + reduced [NADPH--hemoprotein reductase] + O2 = 18-hydroxy-(9Z)-octadecenoate + oxidized [NADPH--hemoprotein reductase] + H2O + H(+). It catalyses the reaction (5Z,8Z,11Z,14Z)-eicosatetraenoate + reduced [NADPH--hemoprotein reductase] + O2 = 20-hydroxy-(5Z,8Z,11Z,14Z)-eicosatetraenoate + oxidized [NADPH--hemoprotein reductase] + H2O + H(+). The enzyme catalyses (4Z,7Z,10Z,13Z,16Z,19Z)-docosahexaenoate + reduced [NADPH--hemoprotein reductase] + O2 = 22-hydroxy-(4Z,7Z,10Z,13Z,16Z,19Z)-docosahexaenoate + oxidized [NADPH--hemoprotein reductase] + H2O + H(+). It carries out the reaction 8-hydroxy-(5Z,9E,11Z,14Z)-eicosatetraenoate + reduced [NADPH--hemoprotein reductase] + O2 = 8,20-dihydroxy-(5Z,9E,11Z,14Z)-eicosatetraenoate + oxidized [NADPH--hemoprotein reductase] + H2O + H(+). The catalysed reaction is 3-hydroxyhexadecanoate + reduced [NADPH--hemoprotein reductase] + O2 = 3,16-dihydroxyhexadecanoate + oxidized [NADPH--hemoprotein reductase] + H2O + H(+). It catalyses the reaction 3-hydroxyoctadecanoate + reduced [NADPH--hemoprotein reductase] + O2 = 3,18-dihydroxyoctadecanoate + oxidized [NADPH--hemoprotein reductase] + H2O + H(+). The enzyme catalyses phylloquinone + reduced [NADPH--hemoprotein reductase] + O2 = omega-hydroxyphylloquinone + oxidized [NADPH--hemoprotein reductase] + H2O + H(+). It carries out the reaction menaquinone-4 + reduced [NADPH--hemoprotein reductase] + O2 = omega-hydroxymenaquinone-4 + oxidized [NADPH--hemoprotein reductase] + H2O + H(+). The catalysed reaction is 2-hexyl-5-pentylresorcinol + reduced [NADPH--hemoprotein reductase] + O2 = 2-hexyl-5-(5-hydroxypentyl)resorcinol + oxidized [NADPH--hemoprotein reductase] + H2O + H(+). It catalyses the reaction 2-hexyl-5-heptylresorcinol + reduced [NADPH--hemoprotein reductase] + O2 = 2-hexyl-5-(7-hydroxyheptyl)resorcinol + oxidized [NADPH--hemoprotein reductase] + H2O + H(+). The enzyme catalyses 12-hydroxy-(5Z,8Z,10E,14Z)-eicosatetraenoate + reduced [NADPH--hemoprotein reductase] + O2 = 12,20-dihydroxy-(5Z,8Z,10E,14Z)-eicosatetraenoate + oxidized [NADPH--hemoprotein reductase] + H2O + H(+). It carries out the reaction 15-hydroxy-(5Z,8Z,11Z,13E)-eicosatetraenoate + reduced [NADPH--hemoprotein reductase] + O2 = 15,20-dihydroxy-(5Z,8Z,11Z,13E)-eicosatetraenoate + oxidized [NADPH--hemoprotein reductase] + H2O + H(+). The protein operates within lipid metabolism; arachidonate metabolism. Its pathway is lipid metabolism; oxylipin biosynthesis. It functions in the pathway cofactor degradation; phylloquinone degradation. It participates in xenobiotic degradation. With respect to regulation, inhibition of the long-chain fatty acid omega-monooxygenase activity by 4-hydroxynonenal (4-HNE) conjugation. Functionally, a cytochrome P450 monooxygenase involved in the metabolism of various endogenous substrates, including fatty acids and their oxygenated derivatives (oxylipins). Mechanistically, uses molecular oxygen inserting one oxygen atom into a substrate, and reducing the second into a water molecule, with two electrons provided by NADPH via cytochrome P450 reductase (CPR; NADPH-ferrihemoprotein reductase). Catalyzes with high efficiency the oxidation of the terminal carbon (omega-oxidation) of 3-hydroxy fatty acids, such as 3-hydroxyhexadecanoic and 3-hydroxyoctadecanoic acids, likely participating in the biosynthesis of long-chain 3-hydroxydicarboxylic acids. Omega-hydroxylates and inactivates phylloquinone (vitamin K1), and menaquinone-4 (MK-4, a form of vitamin K2), both acting as cofactors in blood coagulation. Metabolizes with low efficiciency fatty acids, including (5Z,8Z,11Z,14Z)-eicosatetraenoic acid (arachidonate) and its oxygenated metabolite 8-hydroxyeicosatetraenoic acid (8-HETE). Catalyzes N- and O-demethylation of drugs such as erythromycin, benzphetamine, ethylmorphine, chlorpromazine, imipramine and verapamil. Catalyzes the oxidation of dialkylresorcinol 2. The protein is Cytochrome P450 4F11 of Homo sapiens (Human).